Reading from the N-terminus, the 382-residue chain is Dual-specificity RNA methyltransferase RlmN (382 aa).

E96 (proton acceptor) is an active-site residue. One can recognise a Radical SAM core domain in the interval 102-342 (QGKRGTLCVS…VRTTRGEDID (241 aa)). Cysteines 109 and 345 form a disulfide. [4Fe-4S] cluster-binding residues include C116, C120, and C123. Residues 170-171 (GE), S202, 224-226 (SLH), and N302 contribute to the S-adenosyl-L-methionine site. The active-site S-methylcysteine intermediate is the C345.

Belongs to the radical SAM superfamily. RlmN family. It depends on [4Fe-4S] cluster as a cofactor.

The protein resides in the cytoplasm. The enzyme catalyses adenosine(2503) in 23S rRNA + 2 reduced [2Fe-2S]-[ferredoxin] + 2 S-adenosyl-L-methionine = 2-methyladenosine(2503) in 23S rRNA + 5'-deoxyadenosine + L-methionine + 2 oxidized [2Fe-2S]-[ferredoxin] + S-adenosyl-L-homocysteine. It carries out the reaction adenosine(37) in tRNA + 2 reduced [2Fe-2S]-[ferredoxin] + 2 S-adenosyl-L-methionine = 2-methyladenosine(37) in tRNA + 5'-deoxyadenosine + L-methionine + 2 oxidized [2Fe-2S]-[ferredoxin] + S-adenosyl-L-homocysteine. Functionally, specifically methylates position 2 of adenine 2503 in 23S rRNA and position 2 of adenine 37 in tRNAs. m2A2503 modification seems to play a crucial role in the proofreading step occurring at the peptidyl transferase center and thus would serve to optimize ribosomal fidelity. The sequence is that of Dual-specificity RNA methyltransferase RlmN from Pseudomonas fluorescens (strain Pf0-1).